The primary structure comprises 738 residues: Nucleoprotein (738 aa).

A coiled-coil region spans residues 334–363 (VNVGEQYQQLREAATEAEKQLQQYAETREL). The tract at residues 418–640 (GDRYPDDNDI…QGSESEALPI (223 aa)) is disordered. Acidic residues predominate over residues 461 to 476 (PYDDESNNYPDYEDSA). Residues 544 to 564 (PGSNTNQPQGNMSSTLQSMTP) show a composition bias toward polar residues. The span at 567 to 594 (EESEPDDQKDDDDESLTSLDSEGDEDVE) shows a compositional bias: acidic residues. The span at 616-625 (VDTNQQNGPS) shows a compositional bias: polar residues.

Belongs to the filoviruses nucleoprotein family. Homooligomer. Homomultimerizes to form the nucleocapsid. Binds to viral genomic RNA. Interacts with VP35 and VP30 to form the nucleocapsid. Interacts with host PPP2R5C; this interaction leads to VP30 dephosphorylation and viral transcription. Interacts with VP24; this interaction facilitates nucleocapsid assembly and genome packaging. Interacts with matrix protein VP40; this interaction allows recruitment of the nucleocapsid into progeny virions. Interacts with host STAU1. Interacts with host NXF1 (via RNA-binding domain); this interaction recruits NXF1 to the inclusion bodies were viral replication takes place, probably to export viral mRNA-NXF1 complexes from these sites. Interacts with host CCDC92; this interaction sequesters NP in the host cytoplasm. Interacts with host TRIM14. Phosphorylated and O-glycosylated by host. Acetylated by host EP300 in vitro.

The protein localises to the virion. Its subcellular location is the host cytoplasm. Functionally, oligomerizes into helical capsid to encapsidate the viral genome, protecting it from nucleases and the cellular innate immune response. VP35 binds to and stabilizes monomeric NP, keeping it soluble. Upon virus replication, NP is recruited to bind cooperatively viral genomic RNA and VP35 is released. The encapsidated genomic RNA is termed the nucleocapsid and serves as template for transcription and replication. The nucleocapsid is helical with a pitch of 10.81 NP per turn and a diameter of about 22nm. Each NP binds to six nucleotides of viral genomic RNA, three being exposed to the solvant and three hidden into the nucleocapsid. Also recruits host PPP2R5C phosphatase to dephosphorylate VP30 and thereby promote viral transcription. Upon virion assembly and budding, NP binds to VP24 and possibly host STAU1. The protein is Nucleoprotein (NP) of Sudan ebolavirus (strain Human/Uganda/Gulu/2000) (SEBOV).